Consider the following 250-residue polypeptide: Carboxy-S-adenosyl-L-methionine synthase (250 aa).

Residues tyrosine 45, 70-72 (GCS), 95-96 (DN), 123-124 (DI), asparagine 138, and arginine 205 contribute to the S-adenosyl-L-methionine site.

Belongs to the class I-like SAM-binding methyltransferase superfamily. Cx-SAM synthase family. As to quaternary structure, homodimer.

The catalysed reaction is prephenate + S-adenosyl-L-methionine = carboxy-S-adenosyl-L-methionine + 3-phenylpyruvate + H2O. Its function is as follows. Catalyzes the conversion of S-adenosyl-L-methionine (SAM) to carboxy-S-adenosyl-L-methionine (Cx-SAM). In Marinobacter nauticus (strain ATCC 700491 / DSM 11845 / VT8) (Marinobacter aquaeolei), this protein is Carboxy-S-adenosyl-L-methionine synthase.